The primary structure comprises 98 residues: NADH-ubiquinone oxidoreductase chain 4L (98 aa).

The next 3 membrane-spanning stretches (helical) occupy residues 2-22, 29-49, and 61-81; these read PSIF…TLVF, SLLC…LIIL, and ILLL…LVMV.

This sequence belongs to the complex I subunit 4L family. In terms of assembly, core subunit of respiratory chain NADH dehydrogenase (Complex I) which is composed of 45 different subunits.

The protein localises to the mitochondrion inner membrane. It carries out the reaction a ubiquinone + NADH + 5 H(+)(in) = a ubiquinol + NAD(+) + 4 H(+)(out). Functionally, core subunit of the mitochondrial membrane respiratory chain NADH dehydrogenase (Complex I) which catalyzes electron transfer from NADH through the respiratory chain, using ubiquinone as an electron acceptor. Part of the enzyme membrane arm which is embedded in the lipid bilayer and involved in proton translocation. The polypeptide is NADH-ubiquinone oxidoreductase chain 4L (MT-ND4L) (Avahi laniger (Eastern woolly lemur)).